A 111-amino-acid chain; its full sequence is Cytochrome c (111 aa).

Position 1 is an N-acetylalanine (Ala-1). Heme c is bound by residues Cys-22, Cys-25, and His-26. Residue Lys-80 is modified to N6,N6,N6-trimethyllysine. Met-88 serves as a coordination point for heme c. Position 94 is an N6,N6,N6-trimethyllysine (Lys-94).

The protein belongs to the cytochrome c family. Binds 1 heme c group covalently per subunit.

Its subcellular location is the mitochondrion intermembrane space. In terms of biological role, electron carrier protein. The oxidized form of the cytochrome c heme group can accept an electron from the heme group of the cytochrome c1 subunit of cytochrome reductase. Cytochrome c then transfers this electron to the cytochrome oxidase complex, the final protein carrier in the mitochondrial electron-transport chain. This is Cytochrome c from Cucurbita maxima (Pumpkin).